We begin with the raw amino-acid sequence, 89 residues long: Transcriptional regulator WhiB2 (89 aa).

A compositionally biased stretch (pro residues) spans 1–15 (MVPEAPAPFEEPLPP). A disordered region spans residues 1 to 24 (MVPEAPAPFEEPLPPEATDQWQDR). A 4Fe-4S Wbl-type domain is found at 26-83 (LCAQTDPEAFFPEKGGSTREAKKICMGCEVRHECLEYALAHDERFGIWGGLSERERRR). Cys-27 is a [4Fe-4S] cluster binding site. Ser-42 is modified (phosphoserine). Cys-50, Cys-53, and Cys-59 together coordinate [4Fe-4S] cluster.

Belongs to the WhiB family. The cofactor is [4Fe-4S] cluster. May be phosphorylated, possibly on Ser-42. In terms of processing, the cluster is degraded quickly in the presence of air. Upon cluster removal intramolecular disulfide bonds are formed. Post-translationally, the Fe-S cluster can be nitrosylated by nitric oxide (NO).

The protein resides in the cytoplasm. Acts as a transcriptional regulator. Probably redox-responsive. The apo- but not holo-form probably binds DNA. Functionally, the apo-form functions as a chaperone, preventing aggregation or helping in correct refolding of a number of substrates; this activity does not require ATP or the ability to bind a Fe-S cluster. Chaperone activity is insensitive to the redox state of its cysteine residues. The apo-form has no protein disulfide reductase activity. The apo-form binds to its own promoter. In Mycobacterium tuberculosis (strain ATCC 25618 / H37Rv), this protein is Transcriptional regulator WhiB2 (whiB2).